Consider the following 299-residue polypeptide: Oxygen-dependent coproporphyrinogen-III oxidase (299 aa).

Position 92 (serine 92) interacts with substrate. Histidine 96 and histidine 106 together coordinate a divalent metal cation. The active-site Proton donor is the histidine 106. 108–110 (NVR) is a binding site for substrate. Positions 145 and 175 each coordinate a divalent metal cation. Residues 240–275 (YVEFNLVWDRGTLFGLQTGGRTESILMSMPPLVRWE) are important for dimerization. 258–260 (GGR) serves as a coordination point for substrate.

It belongs to the aerobic coproporphyrinogen-III oxidase family. Homodimer. A divalent metal cation is required as a cofactor.

The protein localises to the cytoplasm. The catalysed reaction is coproporphyrinogen III + O2 + 2 H(+) = protoporphyrinogen IX + 2 CO2 + 2 H2O. The protein operates within porphyrin-containing compound metabolism; protoporphyrin-IX biosynthesis; protoporphyrinogen-IX from coproporphyrinogen-III (O2 route): step 1/1. Its function is as follows. Involved in the heme biosynthesis. Catalyzes the aerobic oxidative decarboxylation of propionate groups of rings A and B of coproporphyrinogen-III to yield the vinyl groups in protoporphyrinogen-IX. This Shigella flexneri protein is Oxygen-dependent coproporphyrinogen-III oxidase.